The sequence spans 1488 residues: Chromosome partition protein MukB (1488 aa).

34–41 (GGNGAGKS) contributes to the ATP binding site. Coiled-coil stretches lie at residues 326–418 (LEAD…QYNQ), 444–472 (LDTFQAKEQEATEKLLSLEQKMSVAQTAH), and 509–602 (RHLA…QRAP). Residues 666-783 (PGGAEDQRLN…SLPIFGRAAR (118 aa)) form a flexible hinge region. 3 coiled-coil regions span residues 835 to 923 (EAEI…AKLE), 977 to 1116 (EMLS…AKAG), and 1209 to 1265 (VEAI…LQSV). Residues 1049-1074 (ADSGAEERARQRRDELHAQLSNNRSR) form a disordered region. The segment covering 1051-1065 (SGAEERARQRRDELH) has biased composition (basic and acidic residues).

The protein belongs to the SMC family. MukB subfamily. In terms of assembly, homodimerization via its hinge domain. Binds to DNA via its C-terminal region. Interacts, and probably forms a ternary complex, with MukE and MukF via its C-terminal region. The complex formation is stimulated by calcium or magnesium. Interacts with tubulin-related protein FtsZ.

Its subcellular location is the cytoplasm. The protein resides in the nucleoid. Plays a central role in chromosome condensation, segregation and cell cycle progression. Functions as a homodimer, which is essential for chromosome partition. Involved in negative DNA supercoiling in vivo, and by this means organize and compact chromosomes. May achieve or facilitate chromosome segregation by condensation DNA from both sides of a centrally located replisome during cell division. This chain is Chromosome partition protein MukB, found in Salmonella enteritidis PT4 (strain P125109).